We begin with the raw amino-acid sequence, 958 residues long: Collagen alpha-1(I) chain (958 aa).

The disordered stretch occupies residues 1–958 (GPMGPSGPRG…PGPPGPPGPP (958 aa)). Residues 50-64 (NGDDGEAGKPGRPGE) are compositionally biased toward basic and acidic residues. Serine 92 carries the phosphoserine modification. Composition is skewed to low complexity over residues 100–116 (DAGP…PGEN) and 139–152 (PAGA…TGAA). Over residues 154–166 (PPGPTGPAGPPGF) the composition is skewed to pro residues. Residues 216–232 (APGIAGAPGFPGARGPS) show a composition bias toward low complexity. Over residues 294–303 (GERGGPGSRG) the composition is skewed to gly residues. Composition is skewed to low complexity over residues 304 to 335 (FPGS…PGEA), 347 to 373 (KGIT…QDGR), 382 to 401 (ARGQ…AGEP), 557 to 571 (SGPS…ARGA), 584 to 614 (AGFA…AGPA), 640 to 656 (SAGP…AGRV), 685 to 694 (ETGPAGRPGE), and 704 to 728 (AGEK…QGIA). Phosphoserine is present on serine 560. Pro residues-rich tracts occupy residues 769–779 (PPGPVGPPGIA) and 808–823 (AGPP…PGPV). The span at 859 to 873 (RGDKGETGEQGDRGI) shows a compositional bias: basic and acidic residues. Positions 892-925 (PGEQGPSGASGPAGPRGPPGSAGAPGKDGINGIP) are enriched in low complexity. Positions 943 to 958 (VGPPGPPGPPGPPGPP) are enriched in pro residues.

Belongs to the fibrillar collagen family. As to quaternary structure, trimers of one alpha 2(I) and two alpha 1(I) chains. Post-translationally, prolines at the third position of the tripeptide repeating unit (G-X-Y) are hydroxylated in some or all of the chains. Forms the fibrils of tendon, ligaments and bones. In bones, the fibrils are mineralized with calcium hydroxyapatite.

It is found in the secreted. The protein resides in the extracellular space. It localises to the extracellular matrix. In terms of biological role, type I collagen is a member of group I collagen (fibrillar forming collagen). The chain is Collagen alpha-1(I) chain from Macrauchenia sp.